A 561-amino-acid polypeptide reads, in one-letter code: GPI mannosyltransferase 3 (561 aa).

8 consecutive transmembrane segments (helical) span residues 3–25 (LIYVFLLILAVRLASVFVVQTYY), 64–84 (IAGLYKILALLQLDSAHLLVV), 110–130 (WALFLILVPWFWFYTGSRTLA), 155–175 (LWPAAICCFLRPTAAVIWLPL), 195–215 (FVLIGLLVAGLGIAIDTYWHG), 246–266 (FSVGLPTVLGINTLPFIFGVM), 275–295 (YPVSKQLLITIFLTLVVLSAV), and 328–348 (TMLWTTALVILVGNVMPAWYL). 2 N-linked (GlcNAc...) asparagine glycosylation sites follow: asparagine 398 and asparagine 456. A disordered region spans residues 525 to 546 (ENAFNRGPDSGQHEPDVHDHPP). The span at 535-546 (GQHEPDVHDHPP) shows a compositional bias: basic and acidic residues.

The protein belongs to the glycosyltransferase 22 family. PIGB subfamily.

The protein localises to the endoplasmic reticulum membrane. The protein operates within glycolipid biosynthesis; glycosylphosphatidylinositol-anchor biosynthesis. Functionally, mannosyltransferase involved in glycosylphosphatidylinositol-anchor biosynthesis. Transfers the third alpha-1,2-mannose to Man2-GlcN-acyl-PI during GPI precursor assembly. The protein is GPI mannosyltransferase 3 of Drosophila melanogaster (Fruit fly).